Consider the following 227-residue polypeptide: Homeobox protein HD-10 (227 aa).

A DNA-binding region (homeobox) is located at residues 30 to 89; the sequence is FVKHRKRTTKAQLKVLEETFETNIRPDANMRKKLGEQLGMTPRSVQVWFQNRRAKIKKLT. Residues 88–115 are disordered; that stretch reads LTQKKMMQQENTDNTKGPDAAHGSSSPK. The span at 92–102 shows a compositional bias: polar residues; sequence KMMQQENTDNT.

The protein resides in the nucleus. The sequence is that of Homeobox protein HD-10 (HD-10) from Encephalitozoon cuniculi (strain GB-M1) (Microsporidian parasite).